The following is a 155-amino-acid chain: DNA gyrase inhibitor (155 aa).

The protein belongs to the DNA gyrase inhibitor family. As to quaternary structure, interacts with DNA gyrase.

The protein localises to the cytoplasm. Its function is as follows. Inhibits the supercoiling activity of DNA gyrase. Acts by inhibiting DNA gyrase at an early step, prior to (or at the step of) binding of DNA by the gyrase. It protects cells against toxins that target DNA gyrase, by inhibiting activity of these toxins and reducing the formation of lethal double-strand breaks in the cell. This chain is DNA gyrase inhibitor, found in Erwinia billingiae (strain Eb661).